Reading from the N-terminus, the 229-residue chain is Large ribosomal subunit protein uL1 (229 aa).

This sequence belongs to the universal ribosomal protein uL1 family. In terms of assembly, part of the 50S ribosomal subunit.

Functionally, binds directly to 23S rRNA. The L1 stalk is quite mobile in the ribosome, and is involved in E site tRNA release. Protein L1 is also a translational repressor protein, it controls the translation of the L11 operon by binding to its mRNA. This chain is Large ribosomal subunit protein uL1, found in Mannheimia succiniciproducens (strain KCTC 0769BP / MBEL55E).